The sequence spans 27 residues: Caerulein precursor fragment R1 (27 aa).

As to expression, expressed by the skin glands.

It localises to the secreted. Functionally, antimicrobial peptide. The polypeptide is Caerulein precursor fragment R1 (Xenopus ruwenzoriensis (Uganda clawed frog)).